Consider the following 64-residue polypeptide: Prokaryotic ubiquitin-like protein Pup (64 aa).

The tract at residues 1–38 is disordered; the sequence is MAQEQTKRGGGGGEDDDPTGSTAAGQERREKLTEETDD. Positions 21-58 are ARC ATPase binding; it reads STAAGQERREKLTEETDDLLDEIDDVLEENAEDFVRAY. Residues 23–52 adopt a coiled-coil conformation; that stretch reads AAGQERREKLTEETDDLLDEIDDVLEENAE. The residue at position 64 (Gln64) is a Deamidated glutamine. Residue Gln64 forms an Isoglutamyl lysine isopeptide (Gln-Lys) (interchain with K-? in acceptor proteins) linkage.

This sequence belongs to the prokaryotic ubiquitin-like protein family. Strongly interacts with the proteasome-associated ATPase ARC through a hydrophobic interface; the interacting region of Pup lies in its C-terminal half. There is one Pup binding site per ARC hexamer ring. In terms of processing, is modified by deamidation of its C-terminal glutamine to glutamate by the deamidase Dop, a prerequisite to the subsequent pupylation process.

It functions in the pathway protein degradation; proteasomal Pup-dependent pathway. Its function is as follows. Protein modifier that is covalently attached to lysine residues of substrate proteins, thereby targeting them for proteasomal degradation. The tagging system is termed pupylation. In Mycolicibacterium gilvum (strain PYR-GCK) (Mycobacterium gilvum (strain PYR-GCK)), this protein is Prokaryotic ubiquitin-like protein Pup.